Here is a 550-residue protein sequence, read N- to C-terminus: MLIERTCAILGKMLEYCASLVALHSCVIMTTNTHITDDRILILDFGSQYSQLIARRVREAGVYSEMYAFDMSEEDIRAFNPNGIILSGGPESVHEEGSPRAPQVVFELGVPVLGICYGFQTMSEQLGGKVEPGTVHEFGYAEVDIQQRDQLVGNLQDRENQLHVWMSHGDKVSRLPEGFSTTASTPSCPFAAASDEARRFYGVQFHPEVTHTAKGAELLANFVHKICGCGGLWTPEHIIDLRVEQLRAQIGDEKVLLGLSGGVDSSVVAALLHKAIGDQLTCVFVDNGLLRLNEGDQVMQMFADNMGIRVIRADAEERFLTALAGEVDPEKKRKIIGREFIEVFAEEARKLDGVKFLAQGTIYPDVIESAASKQGKAHVIKSHHNVGGLPDDLEFELVEPLRDLFKDEVRKLGTTLGLPHSMIYRHPFPGPGLGVRILGEVKKEYADILRLADDIFMQELRASGWYDKTAQAFAVFQPVKSVGVVGDGRRYAWVIALRAVETVDFMTARFAHLPYELVDKISTRIMNEIKDVSRVVYDVSSKPPATIEWE.

One can recognise a Glutamine amidotransferase type-1 domain in the interval 39 to 232 (RILILDFGSQ…VHKICGCGGL (194 aa)). Cys116 serves as the catalytic Nucleophile. Catalysis depends on residues His206 and Glu208. The 193-residue stretch at 233–425 (WTPEHIIDLR…LGLPHSMIYR (193 aa)) folds into the GMPS ATP-PPase domain. 260–266 (SGGVDSS) is an ATP binding site.

Homodimer.

The catalysed reaction is XMP + L-glutamine + ATP + H2O = GMP + L-glutamate + AMP + diphosphate + 2 H(+). The protein operates within purine metabolism; GMP biosynthesis; GMP from XMP (L-Gln route): step 1/1. Catalyzes the synthesis of GMP from XMP. The sequence is that of GMP synthase [glutamine-hydrolyzing] from Acinetobacter baylyi (strain ATCC 33305 / BD413 / ADP1).